Reading from the N-terminus, the 160-residue chain is Phosphopantetheine adenylyltransferase (160 aa).

Position 9 (Ser-9) interacts with substrate. Residues 9-10 (SF) and His-17 each bind ATP. Substrate is bound by residues Lys-41, Leu-73, and Lys-87. ATP contacts are provided by residues 88–90 (GLR), Glu-98, and 123–129 (YSYLSSS).

This sequence belongs to the bacterial CoaD family. Homohexamer. The cofactor is Mg(2+).

Its subcellular location is the cytoplasm. It carries out the reaction (R)-4'-phosphopantetheine + ATP + H(+) = 3'-dephospho-CoA + diphosphate. Its pathway is cofactor biosynthesis; coenzyme A biosynthesis; CoA from (R)-pantothenate: step 4/5. Reversibly transfers an adenylyl group from ATP to 4'-phosphopantetheine, yielding dephospho-CoA (dPCoA) and pyrophosphate. The protein is Phosphopantetheine adenylyltransferase of Clostridium tetani (strain Massachusetts / E88).